An 819-amino-acid chain; its full sequence is DNA topoisomerase 4 subunit A (819 aa).

The Topo IIA-type catalytic domain maps to 30–496 (LPDIRDGLKP…QIIEIDTASL (467 aa)). Tyr-118 serves as the catalytic O-(5'-phospho-DNA)-tyrosine intermediate.

The protein belongs to the type II topoisomerase GyrA/ParC subunit family. ParC type 2 subfamily. Heterotetramer composed of ParC and ParE.

It localises to the cell membrane. It carries out the reaction ATP-dependent breakage, passage and rejoining of double-stranded DNA.. Functionally, topoisomerase IV is essential for chromosome segregation. It relaxes supercoiled DNA. Performs the decatenation events required during the replication of a circular DNA molecule. The protein is DNA topoisomerase 4 subunit A of Streptococcus pyogenes serotype M3 (strain ATCC BAA-595 / MGAS315).